A 437-amino-acid chain; its full sequence is Aspartic proteinase nepenthesin-1 (437 aa).

A signal peptide spans 1-24 (MASSLYSFLLALSIVYIFVAPTHS). A propeptide spans 25–78 (TSRTALNHRHEAKVTGFQIMLEHVDSGKNLTKFQLLERAIERGSRRLQRLEAML) (activation peptide). Residues Asn53 and Asn98 are each glycosylated (N-linked (GlcNAc...) asparagine). In terms of domain architecture, Peptidase A1 spans 95–430 (YLMNLSIGTP…DTGNSVVSFA (336 aa)). Asp113 is a catalytic residue. Cystine bridges form between Cys123-Cys126, Cys129-Cys203, Cys150-Cys168, Cys155-Cys163, Cys240-Cys434, and Cys354-Cys395. Asn131 carries N-linked (GlcNAc...) asparagine glycosylation. Residues Asn198, Asn267, and Asn307 are each glycosylated (N-linked (GlcNAc...) asparagine). Asp315 is a catalytic residue. N-linked (GlcNAc...) asparagine glycosylation occurs at Asn345.

The protein belongs to the peptidase A1 family.

The protein localises to the secreted. It catalyses the reaction Similar to pepsin, but also cleaves on either side of Asp and at Lys-|-Arg.. With respect to regulation, inhibited by pepstatin and by diazoacetyl-D,L-norleucine methyl ester (DAN) in the presence of Cu(2+) ions. Its function is as follows. Extracellular proteinase found in the pitcher fluid of carnivorous plants. Digest prey for nitrogen uptake. The sequence is that of Aspartic proteinase nepenthesin-1 (nep1) from Nepenthes gracilis (Slender pitcher plant).